The following is an 80-amino-acid chain: Large ribosomal subunit protein uL24 (80 aa).

This sequence belongs to the universal ribosomal protein uL24 family. In terms of assembly, part of the 50S ribosomal subunit.

Functionally, one of two assembly initiator proteins, it binds directly to the 5'-end of the 23S rRNA, where it nucleates assembly of the 50S subunit. Its function is as follows. One of the proteins that surrounds the polypeptide exit tunnel on the outside of the subunit. This chain is Large ribosomal subunit protein uL24, found in Chlorobium phaeobacteroides (strain BS1).